Consider the following 82-residue polypeptide: Leucinostatins biosynthesis cluster protein M (82 aa).

The disordered stretch occupies residues 34 to 82; it reads ARNETHDPSGPRAPVSSMRLGPRSRPYHHGTARLRGSPNCSRDSSSAAT. Polar residues predominate over residues 71-82; the sequence is PNCSRDSSSAAT.

Its function is as follows. Part of the gene cluster that mediates the biosynthesis of the lipopeptide antibiotics leucinostatins that show extensive biological activities, including antimalarial, antiviral, antibacterial, antifungal, and antitumor activities, as well as phytotoxic. The function of lcsM within the leucinostatins biosynthesis has not been identified yet. This Purpureocillium lilacinum (Paecilomyces lilacinus) protein is Leucinostatins biosynthesis cluster protein M.